The sequence spans 766 residues: Serine/threonine-protein kinase DCLK2 (766 aa).

Residues 1-45 (MASTRSIELEHFEERDKRPRPGSRRGAPSSSGGSSSSGPKGNGLI) form a disordered region. Basic and acidic residues predominate over residues 7–19 (IELEHFEERDKRP). Residues 24-39 (RRGAPSSSGGSSSSGP) are compositionally biased toward low complexity. Threonine 61 is modified (phosphothreonine). Doublecortin domains follow at residues 72–158 (KKAR…VDYT) and 197–280 (KLVT…AQDD). Composition is skewed to low complexity over residues 300-312 (AVKY…PGPS) and 324-347 (TPSS…SPGS). The segment at 300–378 (AVKYSGSKSP…ELDRCISPEG (79 aa)) is disordered. Phosphoserine is present on serine 362. The Protein kinase domain maps to 394-651 (YKIGKVIGDG…AGQILSHPWV (258 aa)). ATP contacts are provided by residues 400 to 408 (IGDGNFAVV) and lysine 423. The Proton acceptor role is filled by aspartate 515. The residue at position 647 (serine 647) is a Phosphoserine. Residue threonine 666 is modified to Phosphothreonine. The segment at 707–766 (CQDSGRPGMEPISPVPPSVEEIPVPGEAVPAPTPPESPTPHPPPAAPGGERAGTWRRHRD) is disordered. Residues 724–736 (SVEEIPVPGEAVP) are compositionally biased toward low complexity. Positions 737-752 (APTPPESPTPHPPPAA) are enriched in pro residues.

The protein belongs to the protein kinase superfamily. CAMK Ser/Thr protein kinase family. CaMK subfamily. Binds to and stabilizes microtubules. Interacts with MAPK8IP1/JIP-1, MAPK8IP2/JIP-2, MAPK9/JNK2, PPP1R9B/NEURABIN-2 and actin. Post-translationally, autophosphorylated. In terms of tissue distribution, expressed in the brain, heart and eyes.

The protein localises to the cytoplasm. The protein resides in the cytoskeleton. It carries out the reaction L-seryl-[protein] + ATP = O-phospho-L-seryl-[protein] + ADP + H(+). The enzyme catalyses L-threonyl-[protein] + ATP = O-phospho-L-threonyl-[protein] + ADP + H(+). In terms of biological role, protein kinase with a significantly reduced C(a2+)/CAM affinity and dependence compared to other members of the CaMK family. May play a role in the down-regulation of CRE-dependent gene activation probably by phosphorylation of the CREB coactivator CRTC2/TORC2 and the resulting retention of TORC2 in the cytoplasm. The protein is Serine/threonine-protein kinase DCLK2 (DCLK2) of Homo sapiens (Human).